A 116-amino-acid polypeptide reads, in one-letter code: Protein RALF-like 33 (116 aa).

A signal peptide spans 1–23; sequence MRGLSTKPVAIIIAILTVHFLFA. The propeptide at 24 to 67 is removed in mature form; it reads AVTSQSSGDFVPIESKCNGTIAECSLSTAEEEFEMDSEINRRIL. Asn-41 is a glycosylation site (N-linked (GlcNAc...) asparagine). 2 cysteine pairs are disulfide-bonded: Cys-85/Cys-95 and Cys-108/Cys-114.

This sequence belongs to the plant rapid alkalinization factor (RALF) family. In terms of processing, proteolytically cleaved, probably by S1P, a subtilisin-like serine protease (subtilase). In terms of tissue distribution, expressed in roots, stems, leaves and plants.

The protein localises to the secreted. Cell signaling peptide that may regulate plant stress, growth, and development. Mediates a rapid alkalinization of extracellular space by mediating a transient increase in the cytoplasmic Ca(2+) concentration leading to a calcium-dependent signaling events through a cell surface receptor and a concomitant activation of some intracellular mitogen-activated protein kinases. The polypeptide is Protein RALF-like 33 (RALFL33) (Arabidopsis thaliana (Mouse-ear cress)).